The following is a 242-amino-acid chain: Putative ABC transporter ATP-binding protein TTE0246 (242 aa).

An ABC transporter domain is found at 5–242 (FELKNVSYFY…EKLLLKANLI (238 aa)). Residue 38 to 45 (GANGSGKS) coordinates ATP.

The protein belongs to the ABC transporter superfamily.

The protein resides in the cell membrane. Its function is as follows. Probably part of an ABC transporter complex. Responsible for energy coupling to the transport system. This is Putative ABC transporter ATP-binding protein TTE0246 from Caldanaerobacter subterraneus subsp. tengcongensis (strain DSM 15242 / JCM 11007 / NBRC 100824 / MB4) (Thermoanaerobacter tengcongensis).